The following is a 34-amino-acid chain: Photosystem II reaction center protein M (34 aa).

A helical transmembrane segment spans residues 5–25 (ILAFIATALFILIPTAFLLII).

It belongs to the PsbM family. As to quaternary structure, PSII is composed of 1 copy each of membrane proteins PsbA, PsbB, PsbC, PsbD, PsbE, PsbF, PsbH, PsbI, PsbJ, PsbK, PsbL, PsbM, PsbT, PsbX, PsbY, PsbZ, Psb30/Ycf12, at least 3 peripheral proteins of the oxygen-evolving complex and a large number of cofactors. It forms dimeric complexes.

The protein resides in the plastid. The protein localises to the chloroplast thylakoid membrane. One of the components of the core complex of photosystem II (PSII). PSII is a light-driven water:plastoquinone oxidoreductase that uses light energy to abstract electrons from H(2)O, generating O(2) and a proton gradient subsequently used for ATP formation. It consists of a core antenna complex that captures photons, and an electron transfer chain that converts photonic excitation into a charge separation. This subunit is found at the monomer-monomer interface. The sequence is that of Photosystem II reaction center protein M from Agrostis stolonifera (Creeping bentgrass).